The primary structure comprises 149 residues: Deoxyuridine 5'-triphosphate nucleotidohydrolase (149 aa).

Residues 68–70 (RSG), asparagine 81, 85–87 (LID), and methionine 95 each bind substrate.

It belongs to the dUTPase family. It depends on Mg(2+) as a cofactor.

It catalyses the reaction dUTP + H2O = dUMP + diphosphate + H(+). Its pathway is pyrimidine metabolism; dUMP biosynthesis; dUMP from dCTP (dUTP route): step 2/2. Its function is as follows. This enzyme is involved in nucleotide metabolism: it produces dUMP, the immediate precursor of thymidine nucleotides and it decreases the intracellular concentration of dUTP so that uracil cannot be incorporated into DNA. The protein is Deoxyuridine 5'-triphosphate nucleotidohydrolase of Bordetella pertussis (strain Tohama I / ATCC BAA-589 / NCTC 13251).